Reading from the N-terminus, the 516-residue chain is rRNA N(6)-adenosine-methyltransferase ZCCHC4 (516 aa).

Residues cysteine 40, histidine 42, cysteine 66, cysteine 75, cysteine 127, cysteine 130, histidine 142, and histidine 145 each contribute to the Zn(2+) site. Residues 40–84 (CPHELGPTLLFVKVNQGKEETRRFYACSACRDRKDCNFFQWEDEK) form a GRF-type zinc finger. S-adenosyl-L-methionine is bound by residues 174–177 (QYLF), arginine 204, aspartate 227, 245–246 (NM), and aspartate 278. The segment at 339–360 (QVVDYDNHALYKHGKTGRKQSP) is regulatory loop. Zn(2+)-binding residues include cysteine 383, cysteine 386, histidine 396, cysteine 397, cysteine 400, cysteine 403, histidine 413, cysteine 414, cysteine 417, cysteine 420, histidine 427, cysteine 428, cysteine 431, cysteine 434, histidine 439, and cysteine 441. Positions 398 to 448 (EHCNSCTSKDGRKWNHCFLCKKCVKPSWIHCSICNHCALPDHSCKGPKDGC) constitute a DHHC domain. The segment at 446 to 463 (DGCFICGELDHKRSACPN) adopts a CCHC-type zinc-finger fold. The span at 472–484 (KAVRKQKQRKSNK) shows a compositional bias: basic residues. Residues 472–516 (KAVRKQKQRKSNKMKMETTKGQSMNHTSATRKKKRRERTHQYLCS) form a disordered region. A compositionally biased stretch (polar residues) spans 490–499 (TKGQSMNHTS). Residues 500 to 509 (ATRKKKRRER) are compositionally biased toward basic residues.

The protein belongs to the ZCCHC4 family. Interacts with components of the ASC-1 complex TRIP4, ASCC1, ASCC2 and ASCC3. Interact with AHCYL1 and AHCYL2. Interact with YTHDC2.

It is found in the cytoplasm. The protein localises to the nucleus. The protein resides in the nucleolus. The catalysed reaction is adenosine(4220) in 28S rRNA + S-adenosyl-L-methionine = N(6)-methyladenosine(4220) in 28S rRNA + S-adenosyl-L-homocysteine + H(+). Functionally, rRNA N6-methyltransferase that specifically methylates the adenine in position 4220 of 28S rRNA. N6-methylation of adenine(4220) in 28S rRNA is required for translation. In Bos taurus (Bovine), this protein is rRNA N(6)-adenosine-methyltransferase ZCCHC4.